A 737-amino-acid chain; its full sequence is Acetylcholinesterase (737 aa).

Positions 1–38 (MEIRGLLMGRLRLGRRMVPLGLLGVTALLLILPPFALV) are cleaved as a signal peptide. Residues 141–168 (HSGATPRRRGLTRRESNSDANDNDPLVV) are disordered. A glycan (N-linked (GlcNAc...) asparagine) is linked at Asn220. A disulfide bridge connects residues Cys228 and Cys255. The active-site Acyl-ester intermediate is Ser360. Cysteines 414 and 427 form a disulfide. Active-site charge relay system residues include Glu486 and His600. Cys562 and Cys683 form a disulfide bridge. Asn670 carries an N-linked (GlcNAc...) asparagine glycan.

This sequence belongs to the type-B carboxylesterase/lipase family.

It localises to the synapse. It carries out the reaction acetylcholine + H2O = choline + acetate + H(+). Its function is as follows. Rapidly hydrolyzes choline released into the synapse. The polypeptide is Acetylcholinesterase (Ace) (Anopheles gambiae (African malaria mosquito)).